The sequence spans 161 residues: Nucleotide-binding protein Bcenmc03_2579 (161 aa).

The protein belongs to the YajQ family.

Functionally, nucleotide-binding protein. In Burkholderia orbicola (strain MC0-3), this protein is Nucleotide-binding protein Bcenmc03_2579.